The sequence spans 70 residues: Protein SlyX homolog (70 aa).

The protein belongs to the SlyX family.

This Shewanella baltica (strain OS155 / ATCC BAA-1091) protein is Protein SlyX homolog.